Reading from the N-terminus, the 398-residue chain is AT-rich interactive domain-containing protein 6 (398 aa).

A disordered region spans residues 25–87 (EPLEPENDHN…PKTEGENAKK (63 aa)). An ARID domain is found at 106–197 (PVEQVAFLRE…ALLEYEKCLR (92 aa)). A disordered region spans residues 213–236 (SSVEKEPSSHQGSGSGRARRDSAA). The sHSP domain maps to 305 to 398 (VGPVADWVKI…RLFIRVPFEQ (94 aa)).

Belongs to the small heat shock protein (HSP20) family.

Its subcellular location is the nucleus. In Arabidopsis thaliana (Mouse-ear cress), this protein is AT-rich interactive domain-containing protein 6 (ARID6).